Reading from the N-terminus, the 416-residue chain is Keratin, type I cuticular Ha1 (416 aa).

The tract at residues 2 to 56 (PYNCCLPALSCRTSCSSRPCVPPSCHGCTLPGACNIPANVGNCNWFCEGSFNGNE) is head. One can recognise an IF rod domain in the interval 56-367 (EKETMQFLND…GLLESEDCKL (312 aa)). The interval 57 to 91 (KETMQFLNDRLASYMEKVRQLERENAELECRIQER) is coil 1A. The segment at 92–102 (NQQQDPLVCPA) is linker 1. The segment at 103 to 203 (YQAYFRTIEE…HEEEVNTLRC (101 aa)) is coil 1B. Residues 204 to 219 (QLGDRLNVEVDAAPTV) form a linker 12 region. The interval 220–363 (DLNRVLNETR…NTYRGLLESE (144 aa)) is coil 2. The interval 364 to 416 (DCKLPCNPCATSNACGKPIGPCVSNPCVPCPPPAPCTPCVPRPRCGPCNSFVR) is tail.

Belongs to the intermediate filament family.

This is Keratin, type I cuticular Ha1 (Krt31) from Mus musculus (Mouse).